Consider the following 75-residue polypeptide: Large ribosomal subunit protein uL29 (75 aa).

The protein belongs to the universal ribosomal protein uL29 family.

The polypeptide is Large ribosomal subunit protein uL29 (Nostoc punctiforme (strain ATCC 29133 / PCC 73102)).